A 149-amino-acid polypeptide reads, in one-letter code: Transcriptional repressor NrdR (149 aa).

Residues 3–34 (CPFCTAEETKVIDSRLAADGYQIRRRRECIGC) fold into a zinc finger. The 91-residue stretch at 49–139 (PYIIKNNGNR…VYLSFDDIEE (91 aa)) folds into the ATP-cone domain.

Belongs to the NrdR family. Zn(2+) serves as cofactor.

Its function is as follows. Negatively regulates transcription of bacterial ribonucleotide reductase nrd genes and operons by binding to NrdR-boxes. In Haemophilus ducreyi (strain 35000HP / ATCC 700724), this protein is Transcriptional repressor NrdR.